The following is a 147-amino-acid chain: Hemoglobin subunit beta (147 aa).

Valine 2 carries the N-acetylvaline modification. Residues 3 to 147 (HLTPEEKSAV…VANALAHKYH (145 aa)) form the Globin domain. Threonine 13 bears the Phosphothreonine mark. Residue serine 45 is modified to Phosphoserine. Position 60 is an N6-acetyllysine (lysine 60). A heme b-binding site is contributed by histidine 64. Lysine 83 bears the N6-acetyllysine mark. Histidine 93 contributes to the heme b binding site. Cysteine 94 carries the S-nitrosocysteine modification. At lysine 145 the chain carries N6-acetyllysine.

Belongs to the globin family. In terms of assembly, heterotetramer of two alpha chains and two beta chains in adult hemoglobin A (HbA). Red blood cells.

Its function is as follows. Involved in oxygen transport from the lung to the various peripheral tissues. The sequence is that of Hemoglobin subunit beta (HBB) from Pan paniscus (Pygmy chimpanzee).